A 428-amino-acid polypeptide reads, in one-letter code: Cell division cycle 20.6, cofactor of APC complex (428 aa).

7 WD repeats span residues Trp106–Leu145, Asp150–Thr189, Gly193–Gly230, Gly234–Thr273, Glu282–Ser324, Glu326–Glu367, and Gly370–Thr409.

It belongs to the WD repeat CDC20/Fizzy family. In terms of assembly, the APC/C is composed of at least 11 subunits that stay tightly associated throughout the cell cycle.

The protein resides in the nucleus. It functions in the pathway protein modification; protein ubiquitination. Its function is as follows. Component of the anaphase promoting complex/cyclosome (APC/C), a cell cycle-regulated E3 ubiquitin-protein ligase complex that controls progression through mitosis and the G1 phase of the cell cycle. The sequence is that of Cell division cycle 20.6, cofactor of APC complex (CDC20-6) from Arabidopsis thaliana (Mouse-ear cress).